Here is a 1834-residue protein sequence, read N- to C-terminus: Non-reducing polyketide synthase spyA (1834 aa).

One can recognise a Starter acyltransferase (SAT) domain in the interval 91–255 (LAPLTVIIHL…TRIPIYGRYH (165 aa)). In terms of domain architecture, Ketosynthase family 3 (KS3) spans 385–801 (EHSIAVIGAA…GNNTAVIVCE (417 aa)). Residues cysteine 551, histidine 687, and histidine 724 each act as for beta-ketoacyl synthase activity in the active site. Positions 919-1164 (YEGSSLLRSH…KELGPCTWVE (246 aa)) constitute a Malonyl-CoA:ACP transacylase (MAT) domain. The segment at 1269 to 1398 (PLVYLLRDEG…GVISLRQERH (130 aa)) is N-terminal hotdog fold. Residues 1269–1577 (PLVYLLRDEG…FVRITASSLN (309 aa)) enclose the PKS/mFAS DH domain. Residues 1269 to 1577 (PLVYLLRDEG…FVRITASSLN (309 aa)) form a product template (PT) domain region. The segment at 1428–1577 (AISLKEGIIY…FVRITASSLN (150 aa)) is C-terminal hotdog fold. The Carrier 1 domain occupies 1616–1690 (SDILSILSHL…TLCQEIQTQR (75 aa)). Serine 1650 carries the post-translational modification O-(pantetheine 4'-phosphoryl)serine. The disordered stretch occupies residues 1693 to 1720 (RLARASRTTTATRNTSFSLGRRTSSTES). Residues 1697–1710 (ASRTTTATRNTSFS) are compositionally biased toward low complexity. The region spanning 1731–1807 (SKSAAVLAQL…GLARLILASE (77 aa)) is the Carrier 2 domain. Serine 1767 carries the O-(pantetheine 4'-phosphoryl)serine modification.

It depends on pantetheine 4'-phosphate as a cofactor.

The enzyme catalyses 2 malonyl-CoA + acetyl-CoA + 2 H(+) = triacetate lactone + 2 CO2 + 3 CoA. Its pathway is secondary metabolite biosynthesis; terpenoid biosynthesis. Non-reducing polyketide synthase; part of the gene cluster that mediates the biosynthesis of meroterpenoids called sartorypyrones. The biosynthesis of sartorypyrones begins with the production of triacetic acid lactone (TAL) by the NR-PKS spyA using one molecule of acetyl-CoA and two molecules of malonyl-CoA. As spyA lacks a thioesterase (TE) domain, TAL is likely generated through self-release from spyA by spontaneous lactonization. After production of TAL, the prenyltransferase spyF then conjugates geranylgeranyl pyrophosphate (GGPP) to TAL to form geranylgeranyl-triacetate lactone, for which the pathway-specific geranylgeranyl pyrophosphate synthase (GGPS) spyE is required to provide GGPP. Subsequently, geranylgeranyl-triacetate lactone is epoxidized at the terminal olein by the FAD-dependent monooxygenase spyC, followed by cyclization of the terpenoid component catalyzed by the terpene cyclase spyD to produce both the bicyclic sartorypyrone F and the monocyclic sartorypyrone D. Finally, the last step of the biosynthesis involves the acetylation of the meroterpenoids sartorypyrones D and F by the acetyltransferase SpyB to produce sartorypyrones A and G, respectively. The protein is Non-reducing polyketide synthase spyA of Aspergillus fumigatus (strain ATCC MYA-4609 / CBS 101355 / FGSC A1100 / Af293) (Neosartorya fumigata).